Consider the following 216-residue polypeptide: Maintenance of carboxysome distribution protein A (216 aa).

7 residues coordinate ATP: Gly16, Gly17, Gly19, Lys20, Thr21, Thr22, and Gln45. Thr21 is a Mg(2+) binding site.

It belongs to the ParA family. McdA subfamily. As to quaternary structure, self-associates, associates with McdB.

It is found in the cytoplasm. The protein localises to the nucleoid. The catalysed reaction is ATP + H2O = ADP + phosphate + H(+). Functionally, mcdA and McdB together mediate carboxysome positioning on the nucleoid and prevent their aggregation in the cell. McdA is an ATPase that forms dynamic gradients on the nucleoid in response to adapter protein McdB, which associates with carboxysomes. The interplay between McdA gradients on the nucleoid and McdB-bound carboxysomes result in the equal spacing of Cbs along the cell length. Incorrect positioning (aggregation) of carboxysomes results in reduced CO(2) fixation by encapsulated form 1 ribulose-1,5-bisphosphate carboxylase (RuBisCO, cbbL/cbbS), which leads to slower growth. The protein is Maintenance of carboxysome distribution protein A of Halothiobacillus neapolitanus (strain ATCC 23641 / c2) (Thiobacillus neapolitanus).